Consider the following 330-residue polypeptide: Ketol-acid reductoisomerase (NADP(+)) (330 aa).

One can recognise a KARI N-terminal Rossmann domain in the interval 2–182 (IHVYYDKDAN…GCTKAGVIET (181 aa)). Residues 25 to 28 (YGSQ), Arg48, Ser51, Ser53, and 83 to 86 (DEVQ) contribute to the NADP(+) site. The active site involves His108. Gly134 contributes to the NADP(+) binding site. Positions 183–328 (TFKEETETDL…KKLRDMMPWI (146 aa)) constitute a KARI C-terminal knotted domain. Mg(2+) contacts are provided by Asp191, Glu195, Glu227, and Glu231. Substrate is bound at residue Ser252.

It belongs to the ketol-acid reductoisomerase family. The cofactor is Mg(2+).

The enzyme catalyses (2R)-2,3-dihydroxy-3-methylbutanoate + NADP(+) = (2S)-2-acetolactate + NADPH + H(+). The catalysed reaction is (2R,3R)-2,3-dihydroxy-3-methylpentanoate + NADP(+) = (S)-2-ethyl-2-hydroxy-3-oxobutanoate + NADPH + H(+). The protein operates within amino-acid biosynthesis; L-isoleucine biosynthesis; L-isoleucine from 2-oxobutanoate: step 2/4. It functions in the pathway amino-acid biosynthesis; L-valine biosynthesis; L-valine from pyruvate: step 2/4. Its function is as follows. Involved in the biosynthesis of branched-chain amino acids (BCAA). Catalyzes an alkyl-migration followed by a ketol-acid reduction of (S)-2-acetolactate (S2AL) to yield (R)-2,3-dihydroxy-isovalerate. In the isomerase reaction, S2AL is rearranged via a Mg-dependent methyl migration to produce 3-hydroxy-3-methyl-2-ketobutyrate (HMKB). In the reductase reaction, this 2-ketoacid undergoes a metal-dependent reduction by NADPH to yield (R)-2,3-dihydroxy-isovalerate. The polypeptide is Ketol-acid reductoisomerase (NADP(+)) (Halothermothrix orenii (strain H 168 / OCM 544 / DSM 9562)).